Reading from the N-terminus, the 506-residue chain is Peptidyl-prolyl cis-trans isomerase CYP59 (506 aa).

One can recognise a PPIase cyclophilin-type domain in the interval 1-161; that stretch reads MSVLIVTSLG…KNIRIKHTHI (161 aa). Residues 243–321 form the RRM domain; that stretch reads NVLFVCKLNP…RRIHVDFSQS (79 aa). Residues 341 to 357 form a CCHC-type zinc finger; that stretch reads GCFKCGSTDHIAKDCVG. 2 stretches are compositionally biased toward basic and acidic residues: residues 388–404 and 412–506; these read ETPK…EKIQ and GEGK…RRDR. The interval 388–506 is disordered; it reads ETPKHNSHER…REARHERRDR (119 aa).

This sequence belongs to the cyclophilin-type PPIase family. In terms of assembly, component of the BZR1 complex. Interacts with NRPB1 (via CTD domain), SCL28, SCL30, SCL30A, SCL33, SC35, SR30, SR34, RSZ21, RS2Z33, RS31 and RS40. As to expression, ubiquitous.

It is found in the nucleus. The catalysed reaction is [protein]-peptidylproline (omega=180) = [protein]-peptidylproline (omega=0). Its function is as follows. PPIases accelerate the folding of proteins. It catalyzes the cis-trans isomerization of proline imidic peptide bonds in oligopeptides. Influences somehow regulation of RNA pol II (CTD) phosphorylation. Binds RNA with preferences for GC-rich sequences. Probably involved in activities connecting transcription and pre-mRNA processing. Involved in brassinostroid response. The polypeptide is Peptidyl-prolyl cis-trans isomerase CYP59 (CYP59) (Arabidopsis thaliana (Mouse-ear cress)).